Consider the following 570-residue polypeptide: MRYSQYFIPTVKETPSDAEVISHQLMLRGGMIRKLAAGVYNYLPLGLRSIRKVENIVREEMNRAGAIELLMPTVQPAELWQESGRWEQYGKELLRFRDRKDTEFCLGPTHEEVITDLVRREVKSYRQLPINLYQIQGKFRDEIRPRFGLMRGREFIMKDAYSFDVDEKAADISYDKMYQAYRRIFERCGLKFRAVEADTGSIGGSWSHEFMVLAESGEDAIVSCTACDYAANVEKAEARQSAVTEHADPRDMEKVSTPEKKSIEEVAAFLAIHESSLVKTLVLLADNEPVVALLRGDHELNEIKLKNILGCDTLEMAGEEVVVKVTGAPTGFAGPVGLKAKIIADLAVQGMKNFVTGANAKDLHLKNVNLGRDFNVTTFADIRNVVLGDPCPRCESGTLEMWRGIEVGHVFKLGTKYSKAMKATYLDADGKEQIIFMGCYGIGIGRTVAACIEQNHDENGIIFPLPIAPFHCIISALNMKEDVVREASEAIYGQLAAAGIEVLLDDRDERPGFKFKDADLIGIPMRIVVGSKNLADGKVELKCRRSGEVELLSIADAVEKVKAAVNAALK.

It belongs to the class-II aminoacyl-tRNA synthetase family. ProS type 1 subfamily. In terms of assembly, homodimer.

It is found in the cytoplasm. It catalyses the reaction tRNA(Pro) + L-proline + ATP = L-prolyl-tRNA(Pro) + AMP + diphosphate. Catalyzes the attachment of proline to tRNA(Pro) in a two-step reaction: proline is first activated by ATP to form Pro-AMP and then transferred to the acceptor end of tRNA(Pro). As ProRS can inadvertently accommodate and process non-cognate amino acids such as alanine and cysteine, to avoid such errors it has two additional distinct editing activities against alanine. One activity is designated as 'pretransfer' editing and involves the tRNA(Pro)-independent hydrolysis of activated Ala-AMP. The other activity is designated 'posttransfer' editing and involves deacylation of mischarged Ala-tRNA(Pro). The misacylated Cys-tRNA(Pro) is not edited by ProRS. This is Proline--tRNA ligase from Geotalea daltonii (strain DSM 22248 / JCM 15807 / FRC-32) (Geobacter daltonii).